A 254-amino-acid chain; its full sequence is 5'-nucleotidase SurE (254 aa).

4 residues coordinate a divalent metal cation: Asp8, Asp9, Ser40, and Asn93.

Belongs to the SurE nucleotidase family. The cofactor is a divalent metal cation.

It is found in the cytoplasm. The catalysed reaction is a ribonucleoside 5'-phosphate + H2O = a ribonucleoside + phosphate. Functionally, nucleotidase that shows phosphatase activity on nucleoside 5'-monophosphates. In Methylorubrum extorquens (strain CM4 / NCIMB 13688) (Methylobacterium extorquens), this protein is 5'-nucleotidase SurE.